The primary structure comprises 421 residues: Diaminopimelate decarboxylase (421 aa).

At K62 the chain carries N6-(pyridoxal phosphate)lysine. Pyridoxal 5'-phosphate-binding positions include G237 and 279–282; that span reads EPGR. Residues R282, R319, and Y323 each coordinate substrate. C349 acts as the Proton donor in catalysis. Substrate is bound by residues E350 and Y379. Y379 lines the pyridoxal 5'-phosphate pocket.

The protein belongs to the Orn/Lys/Arg decarboxylase class-II family. LysA subfamily. As to quaternary structure, homodimer. Pyridoxal 5'-phosphate serves as cofactor.

It carries out the reaction meso-2,6-diaminopimelate + H(+) = L-lysine + CO2. Its pathway is amino-acid biosynthesis; L-lysine biosynthesis via DAP pathway; L-lysine from DL-2,6-diaminopimelate: step 1/1. In terms of biological role, specifically catalyzes the decarboxylation of meso-diaminopimelate (meso-DAP) to L-lysine. Plays a role in beta-lactam antibiotic resistance. This Staphylococcus aureus (strain COL) protein is Diaminopimelate decarboxylase (lysA).